A 537-amino-acid polypeptide reads, in one-letter code: Protoporphyrinogen oxidase 1, chloroplastic (537 aa).

Residues 1–34 constitute a chloroplast transit peptide; that stretch reads MELSLLRPTTQSLLPSFSKPNLRLNVYKPLRLRC. Ser35 carries the post-translational modification N-acetylserine. FAD-binding positions include 63 to 68, 90 to 91, and 112 to 115; these read GGGISG, EA, and GPNS. Basic and acidic residues predominate over residues 256 to 268; that stretch reads RKNAPKAERDPRL. Residues 256 to 275 form a disordered region; it reads RKNAPKAERDPRLPKPQGQT. 511 to 513 contacts FAD; the sequence is VAL.

The protein belongs to the protoporphyrinogen/coproporphyrinogen oxidase family. Protoporphyrinogen oxidase subfamily. Requires FAD as cofactor. As to expression, expressed at high levels in the leaves and at low levels in the roots and floral buds.

It localises to the plastid. Its subcellular location is the chloroplast. It catalyses the reaction protoporphyrinogen IX + 3 O2 = protoporphyrin IX + 3 H2O2. Its pathway is porphyrin-containing compound metabolism; protoporphyrin-IX biosynthesis; protoporphyrin-IX from protoporphyrinogen-IX: step 1/1. It functions in the pathway porphyrin-containing compound metabolism; chlorophyll biosynthesis. Its activity is regulated as follows. Inhibited by acifluorfen. In terms of biological role, catalyzes the 6-electron oxidation of protoporphyrinogen-IX to form protoporphyrin-IX. The sequence is that of Protoporphyrinogen oxidase 1, chloroplastic (PPOX1) from Arabidopsis thaliana (Mouse-ear cress).